Consider the following 846-residue polypeptide: Putative transcriptional regulator tpeD (846 aa).

Residues 104–166 (KHQSECWQHF…NCRKSVPVSK (63 aa)) form a BED-type; degenerate zinc finger. Residues 734-846 (RAREERDAQQ…RDEDFVYETP (113 aa)) are disordered. The span at 756-769 (PISDSEEAESEDES) shows a compositional bias: acidic residues. Residues 773–786 (PQSPQASQARSQRS) show a composition bias toward low complexity. Positions 797–809 (PLIELDGNEEDEV) are enriched in acidic residues.

The protein resides in the nucleus. Functionally, putative transcriptional regulator; part of the gene cluster that mediates the biosynthesis of polyesters containing 2,4-dihydroxy-6-(2-hydroxypropyl)benzoate and 3-hydroxybutyrate moieties, such as talapolyester G, 15G256beta and 15G256beta-2; as well as to oxidized derivatives such as 15G256alpha. This chain is Putative transcriptional regulator tpeD, found in Talaromyces stipitatus (strain ATCC 10500 / CBS 375.48 / QM 6759 / NRRL 1006) (Penicillium stipitatum).